We begin with the raw amino-acid sequence, 63 residues long: DNA-directed RNA polymerase 7 kDa subunit (63 aa).

The protein belongs to the poxviridae DNA-directed RNA polymerase 7 kDa subunit family. The DNA-dependent RNA polymerase used for intermediate and late genes expression consists of eight subunits 147 kDa, 133 kDa, 35 kDa, 30 kDa, 22 kDa, 19 kDa, 18 kDa and 7 kDa totalling more than 500 kDa in mass. The same holoenzyme, with the addition of the transcription-specificity factor RAP94, is used for early gene expression.

Its subcellular location is the virion. It catalyses the reaction RNA(n) + a ribonucleoside 5'-triphosphate = RNA(n+1) + diphosphate. Part of the DNA-dependent RNA polymerase which catalyzes the transcription of viral DNA into RNA using the four ribonucleoside triphosphates as substrates. Responsible for the transcription of early, intermediate and late genes. DNA-dependent RNA polymerase associates with the early transcription factor (ETF) thereby allowing the early genes transcription. Late transcription, and probably also intermediate transcription, require newly synthesized RNA polymerase. The polypeptide is DNA-directed RNA polymerase 7 kDa subunit (RPO7) (Homo sapiens (Human)).